The following is a 232-amino-acid chain: 5'-methylthioadenosine/S-adenosylhomocysteine nucleosidase (232 aa).

Glu12 acts as the Proton acceptor in catalysis. Substrate-binding positions include Gly78, Ile152, and 173-174 (ME). The active-site Proton donor is the Asp197.

Belongs to the PNP/UDP phosphorylase family. MtnN subfamily. Homodimer.

The catalysed reaction is S-adenosyl-L-homocysteine + H2O = S-(5-deoxy-D-ribos-5-yl)-L-homocysteine + adenine. It catalyses the reaction S-methyl-5'-thioadenosine + H2O = 5-(methylsulfanyl)-D-ribose + adenine. It carries out the reaction 5'-deoxyadenosine + H2O = 5-deoxy-D-ribose + adenine. The protein operates within amino-acid biosynthesis; L-methionine biosynthesis via salvage pathway; S-methyl-5-thio-alpha-D-ribose 1-phosphate from S-methyl-5'-thioadenosine (hydrolase route): step 1/2. In terms of biological role, catalyzes the irreversible cleavage of the glycosidic bond in both 5'-methylthioadenosine (MTA) and S-adenosylhomocysteine (SAH/AdoHcy) to adenine and the corresponding thioribose, 5'-methylthioribose and S-ribosylhomocysteine, respectively. Also cleaves 5'-deoxyadenosine, a toxic by-product of radical S-adenosylmethionine (SAM) enzymes, into 5-deoxyribose and adenine. Thus, is required for in vivo function of the radical SAM enzymes biotin synthase and lipoic acid synthase, that are inhibited by 5'-deoxyadenosine accumulation. This chain is 5'-methylthioadenosine/S-adenosylhomocysteine nucleosidase, found in Klebsiella pneumoniae (strain 342).